An 83-amino-acid chain; its full sequence is Exodeoxyribonuclease 7 small subunit (83 aa).

The protein belongs to the XseB family. As to quaternary structure, heterooligomer composed of large and small subunits.

It localises to the cytoplasm. It catalyses the reaction Exonucleolytic cleavage in either 5'- to 3'- or 3'- to 5'-direction to yield nucleoside 5'-phosphates.. Functionally, bidirectionally degrades single-stranded DNA into large acid-insoluble oligonucleotides, which are then degraded further into small acid-soluble oligonucleotides. The chain is Exodeoxyribonuclease 7 small subunit from Heliobacterium modesticaldum (strain ATCC 51547 / Ice1).